Reading from the N-terminus, the 203-residue chain is Putative 3-methyladenine DNA glycosylase (203 aa).

This sequence belongs to the DNA glycosylase MPG family.

The polypeptide is Putative 3-methyladenine DNA glycosylase (Desulfitobacterium hafniense (strain Y51)).